The primary structure comprises 268 residues: Tryptophan synthase alpha chain (268 aa).

Catalysis depends on proton acceptor residues E49 and D60.

This sequence belongs to the TrpA family. In terms of assembly, tetramer of two alpha and two beta chains.

The enzyme catalyses (1S,2R)-1-C-(indol-3-yl)glycerol 3-phosphate + L-serine = D-glyceraldehyde 3-phosphate + L-tryptophan + H2O. The protein operates within amino-acid biosynthesis; L-tryptophan biosynthesis; L-tryptophan from chorismate: step 5/5. In terms of biological role, the alpha subunit is responsible for the aldol cleavage of indoleglycerol phosphate to indole and glyceraldehyde 3-phosphate. This chain is Tryptophan synthase alpha chain, found in Mannheimia succiniciproducens (strain KCTC 0769BP / MBEL55E).